We begin with the raw amino-acid sequence, 84 residues long: Small ribosomal subunit protein uS17 (84 aa).

Belongs to the universal ribosomal protein uS17 family. In terms of assembly, part of the 30S ribosomal subunit.

One of the primary rRNA binding proteins, it binds specifically to the 5'-end of 16S ribosomal RNA. The polypeptide is Small ribosomal subunit protein uS17 (Karelsulcia muelleri (strain GWSS) (Sulcia muelleri)).